The following is a 125-amino-acid chain: uncharacterized protein (125 aa).

The HTH hxlR-type domain occupies C14–E112.

This is an uncharacterized protein from Bacillus subtilis (strain 168).